Reading from the N-terminus, the 365-residue chain is Aminomethyltransferase (365 aa).

It belongs to the GcvT family. The glycine cleavage system is composed of four proteins: P, T, L and H.

It carries out the reaction N(6)-[(R)-S(8)-aminomethyldihydrolipoyl]-L-lysyl-[protein] + (6S)-5,6,7,8-tetrahydrofolate = N(6)-[(R)-dihydrolipoyl]-L-lysyl-[protein] + (6R)-5,10-methylene-5,6,7,8-tetrahydrofolate + NH4(+). The glycine cleavage system catalyzes the degradation of glycine. This is Aminomethyltransferase from Yersinia pseudotuberculosis serotype O:3 (strain YPIII).